Here is a 248-residue protein sequence, read N- to C-terminus: Glucosamine-6-phosphate isomerase (248 aa).

Residue Asp68 is the Proton acceptor; for enolization step of the active site. Glu137 acts as the For ring-opening step in catalysis. The active-site Proton acceptor; for ring-opening step is the His139. Glu144 functions as the For ring-opening step in the catalytic mechanism.

This sequence belongs to the glucosamine/galactosamine-6-phosphate isomerase family. As to quaternary structure, monomer.

It carries out the reaction alpha-D-glucosamine 6-phosphate + H2O = beta-D-fructose 6-phosphate + NH4(+). In Candida albicans (strain SC5314 / ATCC MYA-2876) (Yeast), this protein is Glucosamine-6-phosphate isomerase (NAG1).